Here is a 1060-residue protein sequence, read N- to C-terminus: Beta-galactosidase (1060 aa).

Substrate is bound by residues N110 and D209. Na(+) is bound at residue D209. Mg(2+) is bound by residues E432, H434, and E477. Substrate contacts are provided by residues E477 and 553–556 (EYAH). E477 serves as the catalytic Proton donor. Catalysis depends on E553, which acts as the Nucleophile. N613 contacts Mg(2+). Na(+)-binding residues include F617 and N620. Substrate is bound by residues N620 and W1035.

Belongs to the glycosyl hydrolase 2 family. As to quaternary structure, homotetramer. Mg(2+) serves as cofactor. The cofactor is Na(+).

It carries out the reaction Hydrolysis of terminal non-reducing beta-D-galactose residues in beta-D-galactosides.. This chain is Beta-galactosidase, found in Yersinia pestis bv. Antiqua (strain Antiqua).